Reading from the N-terminus, the 176-residue chain is Protein CURLY FLAG LEAF 2 (176 aa).

The EAR signature appears at 41–46 (FLELSS). The WW domain occupies 48–82 (FSVPSHLEQCLDLKTGEIYYRSWNSGMRVKEDPRK). 2 disordered regions span residues 77–106 (KEDP…SSEE) and 111–130 (YESE…YHKE). Over residues 93-106 (SSGESSGTVFSSEE) the composition is skewed to low complexity.

In terms of assembly, may interact with BHLH122/CFLAP1 and BHLH80/CFLAP2.

Functionally, may negatively regulate the cuticle development by interacting with the HD-ZIP IV transcription factor HDG1. The protein is Protein CURLY FLAG LEAF 2 of Arabidopsis thaliana (Mouse-ear cress).